The chain runs to 58 residues: Small ribosomal subunit protein bS21 (58 aa).

The disordered stretch occupies residues 39–58 (DKPSVKKRAKSKAAAKYRSR). The span at 43–58 (VKKRAKSKAAAKYRSR) shows a compositional bias: basic residues.

Belongs to the bacterial ribosomal protein bS21 family.

This is Small ribosomal subunit protein bS21 from Chlamydia abortus (strain DSM 27085 / S26/3) (Chlamydophila abortus).